Consider the following 215-residue polypeptide: Ribonuclease HII (215 aa).

The 196-residue stretch at 19–214 (KNVIGVDEAG…KILETEEEKT (196 aa)) folds into the RNase H type-2 domain. Residues Asp25, Glu26, and Asp121 each contribute to the a divalent metal cation site.

It belongs to the RNase HII family. Mn(2+) is required as a cofactor. Mg(2+) serves as cofactor.

It is found in the cytoplasm. The enzyme catalyses Endonucleolytic cleavage to 5'-phosphomonoester.. Endonuclease that specifically degrades the RNA of RNA-DNA hybrids. The protein is Ribonuclease HII of Fusobacterium nucleatum subsp. nucleatum (strain ATCC 25586 / DSM 15643 / BCRC 10681 / CIP 101130 / JCM 8532 / KCTC 2640 / LMG 13131 / VPI 4355).